A 69-amino-acid polypeptide reads, in one-letter code: Beta-defensin 11 (69 aa).

The N-terminal stretch at 1-23 (MRTLCSLLLIGCLLFSYDTPVVG) is a signal peptide. Disulfide bonds link cysteine 35–cysteine 64, cysteine 42–cysteine 57, and cysteine 47–cysteine 65.

Belongs to the beta-defensin family.

The protein resides in the secreted. In terms of biological role, has antibacterial activity. The sequence is that of Beta-defensin 11 (Defb11) from Rattus norvegicus (Rat).